A 185-amino-acid chain; its full sequence is NEDD8-conjugating enzyme UBE2F (185 aa).

Residue Met-1 is modified to N-acetylmethionine. One can recognise a UBC core domain in the interval 32 to 185; the sequence is VRDKLLVKEV…VDEYIKRYAR (154 aa). Residue Cys-116 is the Glycyl thioester intermediate of the active site.

The protein belongs to the ubiquitin-conjugating enzyme family. UBE2F subfamily. In terms of assembly, interacts with UBA3 and RBX2. Interacts (N-terminally acetylated form) with (via DCUN1 domain) DCUN1D1, DCUN1D2, DCUN1D3, DCUN1D4 and DCUN1D5. Post-translationally, the acetylation of Met-1 increases affinity for DCUN1D3 by about 2 orders of magnitude and is crucial for NEDD8 transfer to cullins.

The catalysed reaction is [E1 NEDD8-activating enzyme]-S-[NEDD8 protein]-yl-L-cysteine + [E2 NEDD8-conjugating enzyme]-L-cysteine = [E1 NEDD8-activating enzyme]-L-cysteine + [E2 NEDD8-conjugating enzyme]-S-[NEDD8-protein]-yl-L-cysteine.. It functions in the pathway protein modification; protein neddylation. Functionally, accepts the ubiquitin-like protein NEDD8 from the UBA3-NAE1 E1 complex and catalyzes its covalent attachment to other proteins. Together with the E3 ubiquitin ligase RNF7/RBX2, specifically neddylates cullin-5 (CUL5). Does not neddylate CUL1, CUL2, CUL3, CUL4A or CUL4B. Mediates neddylation of the CUL9-RBX1 complex. The sequence is that of NEDD8-conjugating enzyme UBE2F (Ube2f) from Rattus norvegicus (Rat).